The primary structure comprises 430 residues: Asparagine--tRNA ligase (430 aa).

It belongs to the class-II aminoacyl-tRNA synthetase family. Homodimer.

The protein resides in the cytoplasm. The enzyme catalyses tRNA(Asn) + L-asparagine + ATP = L-asparaginyl-tRNA(Asn) + AMP + diphosphate + H(+). The chain is Asparagine--tRNA ligase from Staphylococcus haemolyticus (strain JCSC1435).